The sequence spans 316 residues: Nucleoprotein (316 aa).

RNA-binding residues include Tyr-43, Tyr-46, Val-76, Arg-122, and Lys-240.

This sequence belongs to the tenuiviruses nucleocapsid protein family.

It is found in the virion. The protein localises to the host cytoplasm. In terms of biological role, encapsidates the genome, protecting it from nucleases. The encapsidated genomic RNA is termed the nucleocapsid (NC), and serves as template for viral transcription and replication. This Maize stripe virus (MStV) protein is Nucleoprotein.